Consider the following 540-residue polypeptide: Zinc transporter ZIP5 (540 aa).

Residues 1–20 (MMGSPVSHLLAGFCVWVVLG) form the signal peptide. The Extracellular portion of the chain corresponds to 21–212 (WVGGSVPNLG…PAPPGDLLSA (192 aa)). Residue asparagine 50 is glycosylated (N-linked (GlcNAc...) asparagine). Residues 78-101 (HGPLTGRAASPAADNSTHRPQNPE) are disordered. Residues 90–101 (ADNSTHRPQNPE) are compositionally biased toward polar residues. Residue asparagine 160 is glycosylated (N-linked (GlcNAc...) asparagine). Residues 213–233 (LLQSALAVLLLSLPSPLSLLL) form a helical membrane-spanning segment. Residues 234–244 (LRLLGPRLLRP) are Cytoplasmic-facing. A helical transmembrane segment spans residues 245–265 (LLGFLGALAVGTLCGDALLHL). Residues 266–287 (LPHAQEGRHAGPGGLPEKDLGP) lie on the Extracellular side of the membrane. The chain crosses the membrane as a helical span at residues 288–308 (GLSVLGGLFLLFVLENMLGLL). The Cytoplasmic segment spans residues 309 to 444 (RHRGLRPRCC…LLQSGLSFRR (136 aa)). The segment at 324 to 377 (NLETRNLDPENGSGMALQPLQAAPEPGAQGQREKNSQHPPALAPPGHQGHSHGH) is disordered. Serine 336 bears the Phosphoserine mark. Position 375 is a pros-methylhistidine (histidine 375). The helical transmembrane segment at 445 to 465 (LLLLSLVSGALGLGGAVLGVG) threads the bilayer. Topologically, residues 466 to 470 (LSLGP) are extracellular. Residues 471 to 491 (VPLTPWVFGVTAGVFLYVALV) form a helical membrane-spanning segment. Residues 492–508 (DMLPALLRPPEPLPTPH) lie on the Cytoplasmic side of the membrane. A helical membrane pass occupies residues 509–529 (VLLQGLGLLLGGGLMLAITLL). The Extracellular segment spans residues 530 to 540 (EERLLPVTTEG).

It belongs to the ZIP transporter (TC 2.A.5) family. In terms of assembly, homodimer. Methylated at His-375 by METTL9. In terms of processing, N-Glycosylated. Expressed in liver, kidney, pancreas, small intestine, colon, spleen, fetal liver and fetal kidney.

The protein resides in the basolateral cell membrane. The catalysed reaction is Zn(2+)(in) = Zn(2+)(out). Its function is as follows. Uniporter that transports zinc(2+) into polarized cells of enterocytes, pancreatic acinar and endoderm cells across the basolateral membrane and participates, notably, in zinc excretion from the intestine by the uptake of zinc from the blood into the intestine. The transport mechanism is temperature- and concentration-dependent and saturable. In addition, is also a high affinity copper transporter in vitro. Also may regulate glucose-stimulated insulin secretion (GSIS) in islets primarily through the zinc-activated SIRT1-PPARGC1A axis. Could regulate the BMP/TGF-beta (bone morphogenetic protein/transforming growth factor-beta) signaling pathway and modulates extracellular matrix (ECM) proteins of the sclera. Plays a role in eye development. This chain is Zinc transporter ZIP5, found in Homo sapiens (Human).